The primary structure comprises 104 residues: Meiotically up-regulated gene 150 protein (104 aa).

3 helical membrane-spanning segments follow: residues 30–50 (FFLK…KAWI), 54–74 (TISL…IPYF), and 84–104 (LLWF…SLEI).

It localises to the endoplasmic reticulum membrane. In terms of biological role, has a role in meiosis. The protein is Meiotically up-regulated gene 150 protein (mug150) of Schizosaccharomyces pombe (strain 972 / ATCC 24843) (Fission yeast).